Here is a 364-residue protein sequence, read N- to C-terminus: Medium-wave-sensitive opsin 2 (364 aa).

The segment at 1–23 (MAQQWSLQRLAGRHPQDSYEDST) is disordered. Over 1–52 (MAQQWSLQRLAGRHPQDSYEDSTQSSIFTYTNSNSTRGPFEGPNYHIAPRWV) the chain is Extracellular. The segment at 17–43 (DSYEDSTQSSIFTYTNSNSTRGPFEGP) is required for 11-cis-retinal regeneration. Residue N34 is glycosylated (N-linked (GlcNAc...) asparagine). Residues 53-77 (YHLTSVWMIFVVIASVFTNGLVLAA) form a helical membrane-spanning segment. At 78–89 (TMKFKKLRHPLN) the chain is on the cytoplasmic side. Residues 90 to 115 (WILVNLAVADLAETVIASTISVVNQV) traverse the membrane as a helical segment. Residues 116 to 129 (YGYFVLGHPMCVLE) lie on the Extracellular side of the membrane. C126 and C203 are joined by a disulfide. Residues 130-149 (GYTVSLCGITGLWSLAIISW) form a helical membrane-spanning segment. The Cytoplasmic portion of the chain corresponds to 150–168 (ERWMVVCKPFGNVRFDAKL). The chain crosses the membrane as a helical span at residues 169-192 (AIVGIAFSWIWAAVWTAPPIFGWS). The Extracellular portion of the chain corresponds to 193–218 (RYWPHGLKTSCGPDVFSGSSYPGVQS). A helical membrane pass occupies residues 219–246 (YMIVLMVTCCITPLSIIVLCYLQVWLAI). Topologically, residues 247–268 (RAVAKQQKESESTQKAEKEVTR) are cytoplasmic. The chain crosses the membrane as a helical span at residues 269 to 292 (MVVVMVLAFCFCWGPYAFFACFAA). Over 293–300 (ANPGYPFH) the chain is Extracellular. A helical transmembrane segment spans residues 301 to 325 (PLMAALPAFFAKSATIYNPVIYVFM). At K312 the chain carries N6-(retinylidene)lysine. At 326-364 (NRQFRNCILQLFGKKVDDGSELSSASKTEVSSVSSVSPA) the chain is on the cytoplasmic side.

The protein belongs to the G-protein coupled receptor 1 family. Opsin subfamily. In terms of processing, N-glycosylated. O-glycosylated. Phosphorylated on some or all of the serine and threonine residues present in the C-terminal region.

It is found in the cell membrane. Functionally, visual pigments are the light-absorbing molecules that mediate vision. They consist of an apoprotein, opsin, covalently linked to cis-retinal. This is Medium-wave-sensitive opsin 2 from Homo sapiens (Human).